Consider the following 350-residue polypeptide: Galactokinase (350 aa).

Residue 14–17 (EHTD) participates in substrate binding. ATP-binding positions include serine 46 and 98–104 (GSGLSSS). Positions 104 and 136 each coordinate Mg(2+). Catalysis depends on aspartate 148, which acts as the Proton acceptor. Tyrosine 197 is a binding site for substrate.

Belongs to the GHMP kinase family. GalK subfamily.

The protein localises to the cytoplasm. The enzyme catalyses alpha-D-galactose + ATP = alpha-D-galactose 1-phosphate + ADP + H(+). It functions in the pathway carbohydrate metabolism; galactose metabolism. Catalyzes the transfer of the gamma-phosphate of ATP to D-galactose to form alpha-D-galactose-1-phosphate (Gal-1-P). This chain is Galactokinase, found in Thermococcus kodakarensis (strain ATCC BAA-918 / JCM 12380 / KOD1) (Pyrococcus kodakaraensis (strain KOD1)).